A 233-amino-acid polypeptide reads, in one-letter code: Large ribosomal subunit protein uL1 (233 aa).

Belongs to the universal ribosomal protein uL1 family. In terms of assembly, part of the 50S ribosomal subunit.

Binds directly to 23S rRNA. The L1 stalk is quite mobile in the ribosome, and is involved in E site tRNA release. In terms of biological role, protein L1 is also a translational repressor protein, it controls the translation of the L11 operon by binding to its mRNA. The polypeptide is Large ribosomal subunit protein uL1 (Shewanella baltica (strain OS185)).